The primary structure comprises 173 residues: MTYFMFLLLMALVVGLVAVASNPTPYFAALGLVVAAGVGCGVLVGHGGSFLSLVLFLIYLGGMLVVFAYSAALAAEPYPEAWGSRSVLGYVLVYLLGVGLVAGFFWGGWYEGSWVVVDGLKEFSVLRGDVSGVAVMYSSGGGMLVICAWVLLLTLLVVLELTRGLSRGALRAV.

Transmembrane regions (helical) follow at residues 1-21, 25-45, 53-73, 87-107, and 141-161; these read MTYFMFLLLMALVVGLVAVAS, PYFAALGLVVAAGVGCGVLVG, LVLFLIYLGGMLVVFAYSAAL, VLGYVLVYLLGVGLVAGFFWG, and GGMLVICAWVLLLTLLVVLEL.

This sequence belongs to the complex I subunit 6 family.

It is found in the mitochondrion membrane. The enzyme catalyses a ubiquinone + NADH + 5 H(+)(in) = a ubiquinol + NAD(+) + 4 H(+)(out). Its function is as follows. Core subunit of the mitochondrial membrane respiratory chain NADH dehydrogenase (Complex I) that is believed to belong to the minimal assembly required for catalysis. Complex I functions in the transfer of electrons from NADH to the respiratory chain. The immediate electron acceptor for the enzyme is believed to be ubiquinone. This chain is NADH-ubiquinone oxidoreductase chain 6 (MT-ND6), found in Carassius auratus (Goldfish).